Reading from the N-terminus, the 791-residue chain is Protein Rf1, mitochondrial (791 aa).

Residues 1–27 (MARRAASRAVGALRSDGSIQGRGGRAG) constitute a mitochondrion transit peptide. The segment at 1 to 31 (MARRAASRAVGALRSDGSIQGRGGRAGGSGA) is disordered. The span at 20-30 (QGRGGRAGGSG) shows a compositional bias: gly residues. PPR repeat units follow at residues 86–120 (DLCT…GFRV), 121–156 (DAIA…GCIP), 157–194 (NVFS…GSPP), 195–229 (DVVS…GILP), 230–264 (DVVT…GVMP), 265–299 (DCMT…GVEP), 300–334 (DVVT…GLKP), 335–369 (EITT…GIHP), 370–404 (DHYV…GLNP), 405–439 (NAVT…GLSP), 440–474 (GNIV…GICL), 475–509 (NTIF…GVKP), 510–544 (NVIT…GLKP), 545–579 (NTVT…GVSP), 580–614 (DIIT…GTQI), 615–649 (ELST…DLKL), 650–684 (EART…GLVP), 685–719 (NYWT…GCTV), and 720–754 (DSGM…HFSL).

The protein resides in the mitochondrion. Its function is as follows. Reduces the expression of the cytoplasmic male sterility (CMS)-associated mitochondrial gene ORF79, encoding a cytotoxic peptide. Can restore male fertility by blocking ORF79 production via endonucleolytic cleavage of dicistronic ATP6/ORF79 mRNA. Promotes the editing of ATP6 mRNAs independently of its cleavage function. In Oryza sativa subsp. indica (Rice), this protein is Protein Rf1, mitochondrial (Rf1).